A 219-amino-acid polypeptide reads, in one-letter code: Oligoribonuclease (219 aa).

The Exonuclease domain occupies 19 to 184 (LVWVDLEMTG…ADIVESIREL (166 aa)). Tyrosine 141 is a catalytic residue.

Belongs to the oligoribonuclease family.

It is found in the cytoplasm. Its function is as follows. 3'-to-5' exoribonuclease specific for small oligoribonucleotides. In Corynebacterium glutamicum (strain R), this protein is Oligoribonuclease.